The following is a 177-amino-acid chain: Large ribosomal subunit protein uL6 (177 aa).

This sequence belongs to the universal ribosomal protein uL6 family. As to quaternary structure, part of the 50S ribosomal subunit.

This protein binds to the 23S rRNA, and is important in its secondary structure. It is located near the subunit interface in the base of the L7/L12 stalk, and near the tRNA binding site of the peptidyltransferase center. The polypeptide is Large ribosomal subunit protein uL6 (Sodalis glossinidius (strain morsitans)).